A 147-amino-acid polypeptide reads, in one-letter code: PTPN13-like protein, Y-linked (147 aa).

In terms of tissue distribution, expressed in testis. Detected in spermatocytes, spermatids and spermatozoa (at protein level).

The protein is PTPN13-like protein, Y-linked (PRY) of Homo sapiens (Human).